We begin with the raw amino-acid sequence, 473 residues long: Cysteine--tRNA ligase (473 aa).

C27 serves as a coordination point for Zn(2+). A 'HIGH' region motif is present at residues I29–H39. Residues C213, H238, and E242 each coordinate Zn(2+). The 'KMSKS' region signature appears at K271–S275. Residue K274 participates in ATP binding.

It belongs to the class-I aminoacyl-tRNA synthetase family. Zn(2+) serves as cofactor.

It is found in the cytoplasm. The enzyme catalyses tRNA(Cys) + L-cysteine + ATP = L-cysteinyl-tRNA(Cys) + AMP + diphosphate. This Pyrobaculum calidifontis (strain DSM 21063 / JCM 11548 / VA1) protein is Cysteine--tRNA ligase.